We begin with the raw amino-acid sequence, 359 residues long: Guanine nucleotide-binding protein subunit alpha-11 (359 aa).

Residues Cys9 and Cys10 are each lipidated (S-palmitoyl cysteine). The G-alpha domain maps to 38–359 (RELKLLLLGT…QLNLKEYNLV (322 aa)). Positions 41-54 (KLLLLGTGESGKST) are G1 motif. Residues 46 to 53 (GTGESGKS) and 180 to 183 (LRVR) each bind GTP. Ser53 provides a ligand contact to Mg(2+). Residues 178-186 (DVLRVRVPT) are G2 motif. Position 186 (Thr186) interacts with Mg(2+). Residues 201-210 (FRMVDVGGQR) form a G3 motif region. The tract at residues 270–277 (ILFLNKKD) is G4 motif. Residues 274-277 (NKKD) and Ala331 each bind GTP. Residues 329–334 (TCATDT) form a G5 motif region.

Belongs to the G-alpha family. G(q) subfamily. G proteins are composed of 3 units; alpha, beta and gamma. The alpha chain contains the guanine nucleotide binding site. Interacts with RGS22. Interacts with NTSR1.

It is found in the cell membrane. The protein resides in the cytoplasm. The catalysed reaction is GTP + H2O = GDP + phosphate + H(+). In terms of biological role, guanine nucleotide-binding proteins (G proteins) function as transducers downstream of G protein-coupled receptors (GPCRs) in numerous signaling cascades. The alpha chain contains the guanine nucleotide binding site and alternates between an active, GTP-bound state and an inactive, GDP-bound state. Signaling by an activated GPCR promotes GDP release and GTP binding. The alpha subunit has a low GTPase activity that converts bound GTP to GDP, thereby terminating the signal. Both GDP release and GTP hydrolysis are modulated by numerous regulatory proteins. Signaling is mediated via phospholipase C-beta-dependent inositol lipid hydrolysis for signal propagation: activates phospholipase C-beta: following GPCR activation, GNA11 activates PLC-beta (PLCB1, PLCB2, PLCB3 or PLCB4), leading to production of diacylglycerol (DAG) and inositol 1,4,5-trisphosphate (IP3). Transduces FFAR4 signaling in response to long-chain fatty acids (LCFAs). Together with GNAQ, required for heart development. In the respiratory epithelium, transmits OXGR1-dependent signals that lead to downstream intracellular Ca(2+) release and mucocilliary clearance of airborne pathogens. The chain is Guanine nucleotide-binding protein subunit alpha-11 (GNA11) from Sus scrofa (Pig).